We begin with the raw amino-acid sequence, 354 residues long: Uroporphyrinogen decarboxylase (354 aa).

Residues Arg27–Arg31, Asp77, Tyr154, Thr209, and His327 contribute to the substrate site.

The protein belongs to the uroporphyrinogen decarboxylase family. In terms of assembly, homodimer.

It localises to the cytoplasm. The catalysed reaction is uroporphyrinogen III + 4 H(+) = coproporphyrinogen III + 4 CO2. It functions in the pathway porphyrin-containing compound metabolism; protoporphyrin-IX biosynthesis; coproporphyrinogen-III from 5-aminolevulinate: step 4/4. Functionally, catalyzes the decarboxylation of four acetate groups of uroporphyrinogen-III to yield coproporphyrinogen-III. The sequence is that of Uroporphyrinogen decarboxylase from Escherichia coli (strain UTI89 / UPEC).